Here is a 203-residue protein sequence, read N- to C-terminus: MIQTAFTALLLLAIGYLLGAIPSGYLAGRWLKGIDLRDCGSGSTGATNVLRNVGKGPALVVFLIDVGKGALAVLLAKSVGLNDWLQVLTGLAALAGHIWPVWLGWKGGKAVATGLGIFLGLAWPVGLACFGLFMAVISIFRIVSLSSVVAAIGLPLLMLLSGSSSAYVVVSLVASLMVLWRHRSNIERLLAGTEPKIGAKAKG.

Helical transmembrane passes span 1 to 21 (MIQTAFTALLLLAIGYLLGAI), 84 to 104 (WLQVLTGLAALAGHIWPVWLG), 117 to 137 (IFLGLAWPVGLACFGLFMAVI), and 157 to 179 (LMLLSGSSSAYVVVSLVASLMVL).

This sequence belongs to the PlsY family. Probably interacts with PlsX.

The protein localises to the cell inner membrane. The enzyme catalyses an acyl phosphate + sn-glycerol 3-phosphate = a 1-acyl-sn-glycero-3-phosphate + phosphate. Its pathway is lipid metabolism; phospholipid metabolism. In terms of biological role, catalyzes the transfer of an acyl group from acyl-phosphate (acyl-PO(4)) to glycerol-3-phosphate (G3P) to form lysophosphatidic acid (LPA). This enzyme utilizes acyl-phosphate as fatty acyl donor, but not acyl-CoA or acyl-ACP. In Synechococcus sp. (strain CC9605), this protein is Glycerol-3-phosphate acyltransferase.